We begin with the raw amino-acid sequence, 1620 residues long: NAD-specific glutamate dehydrogenase (1620 aa).

Residue Lys-851 is part of the active site.

It belongs to the Glu/Leu/Phe/Val dehydrogenases family. As to quaternary structure, homotetramer. In terms of processing, contains disulfide bonds (interchain).

The enzyme catalyses L-glutamate + NAD(+) + H2O = 2-oxoglutarate + NH4(+) + NADH + H(+). Activity subject to allosteric control by arginine and citrate, which function as positive and negative effectors, respectively. Functionally, involved in arginine catabolism by converting L-glutamate, into 2-oxoglutarate, which is then channeled into the tricarboxylic acid cycle. Can also utilize other amino acids of the glutamate family. The chain is NAD-specific glutamate dehydrogenase (gdhB) from Pseudomonas aeruginosa (strain ATCC 15692 / DSM 22644 / CIP 104116 / JCM 14847 / LMG 12228 / 1C / PRS 101 / PAO1).